The sequence spans 104 residues: MFVDVELLHSGANESHYAGEHAHGGADQLSRGPLLSGMFGTFPVAQTFHDAVGAAHAQQMRNLHAHRQALITVGEKARHAATGFTDMDDGNAAELKAVVCSCAT.

This is an uncharacterized protein from Mycobacterium tuberculosis (strain ATCC 25618 / H37Rv).